The chain runs to 415 residues: Multifunctional CCA protein (415 aa).

ATP-binding residues include Gly-8 and Arg-11. The CTP site is built by Gly-8 and Arg-11. The Mg(2+) site is built by Glu-21 and Asp-23. ATP-binding residues include Arg-91, Arg-137, and Arg-140. CTP contacts are provided by Arg-91, Arg-137, and Arg-140. The HD domain maps to Ala-228–Phe-329.

Belongs to the tRNA nucleotidyltransferase/poly(A) polymerase family. Bacterial CCA-adding enzyme type 1 subfamily. As to quaternary structure, monomer. Can also form homodimers and oligomers. Mg(2+) is required as a cofactor. It depends on Ni(2+) as a cofactor.

It carries out the reaction a tRNA precursor + 2 CTP + ATP = a tRNA with a 3' CCA end + 3 diphosphate. The enzyme catalyses a tRNA with a 3' CCA end + 2 CTP + ATP = a tRNA with a 3' CCACCA end + 3 diphosphate. Functionally, catalyzes the addition and repair of the essential 3'-terminal CCA sequence in tRNAs without using a nucleic acid template. Adds these three nucleotides in the order of C, C, and A to the tRNA nucleotide-73, using CTP and ATP as substrates and producing inorganic pyrophosphate. tRNA 3'-terminal CCA addition is required both for tRNA processing and repair. Also involved in tRNA surveillance by mediating tandem CCA addition to generate a CCACCA at the 3' terminus of unstable tRNAs. While stable tRNAs receive only 3'-terminal CCA, unstable tRNAs are marked with CCACCA and rapidly degraded. The protein is Multifunctional CCA protein of Halorhodospira halophila (strain DSM 244 / SL1) (Ectothiorhodospira halophila (strain DSM 244 / SL1)).